The chain runs to 875 residues: Valine--tRNA ligase (875 aa).

The 'HIGH' region motif lies at 45 to 55 (PNVTGVLHMGH). The short motif at 524–528 (KMSKS) is the 'KMSKS' region element. Residue Lys527 coordinates ATP. Residues 803–837 (VKLLIDKTKELIRLEKQLEKYKMLKISVSKKLENE) are a coiled coil.

It belongs to the class-I aminoacyl-tRNA synthetase family. ValS type 1 subfamily. As to quaternary structure, monomer.

The protein localises to the cytoplasm. The enzyme catalyses tRNA(Val) + L-valine + ATP = L-valyl-tRNA(Val) + AMP + diphosphate. In terms of biological role, catalyzes the attachment of valine to tRNA(Val). As ValRS can inadvertently accommodate and process structurally similar amino acids such as threonine, to avoid such errors, it has a 'posttransfer' editing activity that hydrolyzes mischarged Thr-tRNA(Val) in a tRNA-dependent manner. In Borrelia garinii subsp. bavariensis (strain ATCC BAA-2496 / DSM 23469 / PBi) (Borreliella bavariensis), this protein is Valine--tRNA ligase.